Reading from the N-terminus, the 232-residue chain is MAKLSKRQKLIREKVDSTRAYSVDEAVALLAELGQNVKFKESVDVAVNLGVDARKSDQVVRSSTVLPHGTGKTVRVAVFTQGANAEKATAAGADVVGMDDLADEVKKGNMDFDVVIATPDAMRVVGQLGQILGPRGLMPNPKVGTVTADVETAVKNAKAGQVRYRTDKNGIIHAPLGNVEFSAQNIKENLEALVADLKKAKPASSKGVYLKKITISSTMGPGLTIDQGTLSI.

It belongs to the universal ribosomal protein uL1 family. As to quaternary structure, part of the 50S ribosomal subunit.

Its function is as follows. Binds directly to 23S rRNA. The L1 stalk is quite mobile in the ribosome, and is involved in E site tRNA release. Protein L1 is also a translational repressor protein, it controls the translation of the L11 operon by binding to its mRNA. The sequence is that of Large ribosomal subunit protein uL1 from Marinobacter nauticus (strain ATCC 700491 / DSM 11845 / VT8) (Marinobacter aquaeolei).